A 197-amino-acid polypeptide reads, in one-letter code: Putative manganese efflux pump MntP 1 (197 aa).

6 helical membrane passes run 8–28, 43–63, 66–86, 123–143, 146–166, and 176–196; these read VILL…GLGA, VYAA…GYLL, VLLG…LILL, LAIA…LLAL, WLAC…GIYL, and DKAE…VMFI.

The protein belongs to the MntP (TC 9.B.29) family.

The protein localises to the cell inner membrane. Its function is as follows. Probably functions as a manganese efflux pump. This chain is Putative manganese efflux pump MntP 1, found in Psychrobacter cryohalolentis (strain ATCC BAA-1226 / DSM 17306 / VKM B-2378 / K5).